A 148-amino-acid polypeptide reads, in one-letter code: Deoxyuridine 5'-triphosphate nucleotidohydrolase (148 aa).

Substrate-binding positions include 67–69 (RSG), Asn80, 84–86 (LID), and Met94.

Belongs to the dUTPase family. Mg(2+) serves as cofactor.

The catalysed reaction is dUTP + H2O = dUMP + diphosphate + H(+). It participates in pyrimidine metabolism; dUMP biosynthesis; dUMP from dCTP (dUTP route): step 2/2. In terms of biological role, this enzyme is involved in nucleotide metabolism: it produces dUMP, the immediate precursor of thymidine nucleotides and it decreases the intracellular concentration of dUTP so that uracil cannot be incorporated into DNA. The polypeptide is Deoxyuridine 5'-triphosphate nucleotidohydrolase (Ralstonia nicotianae (strain ATCC BAA-1114 / GMI1000) (Ralstonia solanacearum)).